A 716-amino-acid polypeptide reads, in one-letter code: Polycystin-2 (716 aa).

Composition is skewed to basic and acidic residues over residues 1–10 (MNYGAADERW) and 30–41 (MVSEEYEHDKKK). The tract at residues 1-44 (MNYGAADERWANPPQPVAAAEHGPSFDHSMVSEEYEHDKKKNPA) is disordered. Topologically, residues 1 to 72 (MNYGAADERW…SDGKIKLTAR (72 aa)) are cytoplasmic. A helical transmembrane segment spans residues 73 to 93 (SFMEVGGYAVFLIVLVYVAFA). The Extracellular segment spans residues 94-324 (QNSIQSYYYS…YQTSGGTRMM (231 aa)). N-linked (GlcNAc...) asparagine glycosylation is found at Asn150 and Asn177. Cys180 and Cys193 are joined by a disulfide. A helical membrane pass occupies residues 325 to 345 (IFEGIFCGFILYFIFEELFAI). Topologically, residues 346 to 355 (GRHRLHYLTQ) are cytoplasmic. The helical transmembrane segment at 356-376 (FWNLVDVVLLGFSVATIILSV) threads the bilayer. Asn377 carries N-linked (GlcNAc...) asparagine glycosylation. At 377–409 (NRTKTGVNRVNSVIENGLTNAPFDDVTSSENSY) the chain is on the extracellular side. A helical transmembrane segment spans residues 410–430 (LNIKACVVFVAWVKVFKFISV). Over 431–447 (NKTMSQLSSTLTRSAKD) the chain is Cytoplasmic. Residues 448-468 (IGGFAVMFAVFFFAFAQFGYL) form a helical membrane-spanning segment. The Extracellular portion of the chain corresponds to 469–482 (CFGTQIADYSNLYN). Residues 483-497 (SAFALLRLILGDFNF) constitute an intramembrane region (pore-forming). The Extracellular segment spans residues 498-510 (SALESCNRFFGPA). The chain crosses the membrane as a helical span at residues 511 to 531 (FFIAYVFFVSFILLNMFLAII). Residues 532–716 (NDSYVEVKAE…ITSIADKKEE (185 aa)) are Cytoplasmic-facing. At Ser534 the chain carries Phosphoserine; by CK2. The stretch at 613-680 (EKVAEDIADE…IEKQRVQQQD (68 aa)) forms a coiled coil. The tract at residues 696 to 716 (RNRESAARRPTITSIADKKEE) is disordered.

It belongs to the polycystin family. In terms of processing, phosphorylated. CK2 (kin-3 and kin-10) and calcineurin act antagonistically to regulate the phosphorylation state. In terms of tissue distribution, exclusively expressed in a subset of 3 categories of adult male sensory neurons: ray neurons, hook neurons and head cephalic (CEM) neurons. Expressed in the male tail.

The protein localises to the cell membrane. The protein resides in the cell projection. Its subcellular location is the cilium membrane. It is found in the cilium. It localises to the axon. The protein localises to the dendrite. The protein resides in the perikaryon. Its subcellular location is the endoplasmic reticulum membrane. In terms of biological role, functions as a calcium permeable cation channel. Required for 2 aspects of male mating behavior: response to hermaphrodite contact and vulva location. Acts in the same pathway as lov-1 and atp-2 in response behavior. The protein is Polycystin-2 of Caenorhabditis elegans.